The chain runs to 466 residues: Chromosomal replication initiator protein DnaA (466 aa).

The tract at residues 1–86 is domain I, interacts with DnaA modulators; sequence MSLSLWQQCL…EVGTKPVTQT (86 aa). Positions 86–129 are domain II; sequence TLKTPVHNVVAPTQTTTAQPQRVAPAARSGWDNVPAPAEPTYRS. The tract at residues 130-346 is domain III, AAA+ region; the sequence is NVNVKHTFDN…GALNRVIANA (217 aa). G174, G176, K177, and T178 together coordinate ATP. The domain IV, binds dsDNA stretch occupies residues 347 to 466; the sequence is NFTGRAITID…FSNLIRTLSS (120 aa).

This sequence belongs to the DnaA family. As to quaternary structure, oligomerizes as a right-handed, spiral filament on DNA at oriC.

It localises to the cytoplasm. Its function is as follows. Plays an essential role in the initiation and regulation of chromosomal replication. ATP-DnaA binds to the origin of replication (oriC) to initiate formation of the DNA replication initiation complex once per cell cycle. Binds the DnaA box (a 9 base pair repeat at the origin) and separates the double-stranded (ds)DNA. Forms a right-handed helical filament on oriC DNA; dsDNA binds to the exterior of the filament while single-stranded (ss)DNA is stabiized in the filament's interior. The ATP-DnaA-oriC complex binds and stabilizes one strand of the AT-rich DNA unwinding element (DUE), permitting loading of DNA polymerase. After initiation quickly degrades to an ADP-DnaA complex that is not apt for DNA replication. Binds acidic phospholipids. This is Chromosomal replication initiator protein DnaA from Salmonella choleraesuis (strain SC-B67).